Reading from the N-terminus, the 101-residue chain is Small ribosomal subunit protein uS14 (101 aa).

It belongs to the universal ribosomal protein uS14 family. In terms of assembly, part of the 30S ribosomal subunit. Contacts proteins S3 and S10.

Functionally, binds 16S rRNA, required for the assembly of 30S particles and may also be responsible for determining the conformation of the 16S rRNA at the A site. This Ehrlichia ruminantium (strain Welgevonden) protein is Small ribosomal subunit protein uS14.